We begin with the raw amino-acid sequence, 294 residues long: 4-hydroxy-tetrahydrodipicolinate synthase (294 aa).

Thr-45 is a pyruvate binding site. Residue Tyr-133 is the Proton donor/acceptor of the active site. Catalysis depends on Lys-161, which acts as the Schiff-base intermediate with substrate. Ile-203 is a binding site for pyruvate.

The protein belongs to the DapA family. In terms of assembly, homotetramer; dimer of dimers.

The protein resides in the cytoplasm. The enzyme catalyses L-aspartate 4-semialdehyde + pyruvate = (2S,4S)-4-hydroxy-2,3,4,5-tetrahydrodipicolinate + H2O + H(+). The protein operates within amino-acid biosynthesis; L-lysine biosynthesis via DAP pathway; (S)-tetrahydrodipicolinate from L-aspartate: step 3/4. Catalyzes the condensation of (S)-aspartate-beta-semialdehyde [(S)-ASA] and pyruvate to 4-hydroxy-tetrahydrodipicolinate (HTPA). This chain is 4-hydroxy-tetrahydrodipicolinate synthase, found in Shewanella pealeana (strain ATCC 700345 / ANG-SQ1).